Here is a 271-residue protein sequence, read N- to C-terminus: Transmembrane protein 150A (271 aa).

The Cytoplasmic portion of the chain corresponds to 1-2; that stretch reads MT. The helical transmembrane segment at 3–23 threads the bilayer; that stretch reads AWILLPVSLSAFSITGIWTVY. Over 24–75 the chain is Extracellular; it reads AMAVMNRHVCPVENWSYNESCSPDPAEQGGPKSCCTLDDVPLISKCGTYPPE. N37 and N41 each carry an N-linked (GlcNAc...) asparagine glycan. Residues 76–96 traverse the membrane as a helical segment; that stretch reads SCLFSLIGNMGAVMVALICLL. Residues 97–108 lie on the Cytoplasmic side of the membrane; it reads RYGQLLEQSRHS. Residues 109 to 129 traverse the membrane as a helical segment; sequence WINTTALITGCTNAAGLVVVG. Topologically, residues 130 to 140 are extracellular; that stretch reads NFQVDHAKSLH. A helical membrane pass occupies residues 141–161; sequence YIGTGVAFTAGLLFVCLHCVL. The Cytoplasmic segment spans residues 162–178; the sequence is FYHGATTPLDMAMAYLR. Residues 179–199 traverse the membrane as a helical segment; it reads SVLAVIAFITLVLSGVFFLHE. The Extracellular segment spans residues 200-211; it reads SSQLQHGAALCE. The chain crosses the membrane as a helical span at residues 212-232; sequence WVFVLDILIFYGTFSYEFGTI. The Cytoplasmic portion of the chain corresponds to 233-271; it reads SSDTLVAALQPAPGRACKSSGSSSTSTHLNCAPESIAMI.

Belongs to the DRAM/TMEM150 family. Interacts (via C-terminal cytoplasmic tail) with PI4KA.

Its subcellular location is the cell membrane. Regulates localization of phosphatidylinositol 4-kinase (PI4K) to the plasma membrane, possibly by reducing the association of TTC7 (TTC7A or TTC7B) with the PI4K complex. Acts as a regulator of phosphatidylinositol 4-phosphate (PtdIns(4)P) synthesis. May also play a role in fasting-induced catabolism. The protein is Transmembrane protein 150A (Tmem150a) of Mus musculus (Mouse).